We begin with the raw amino-acid sequence, 209 residues long: Phosphoheptose isomerase (209 aa).

One can recognise an SIS domain in the interval 50-209 (IADTFREGGK…ELVEKMMGYD (160 aa)). A substrate-binding site is contributed by 65-67 (NGG). 2 residues coordinate Zn(2+): H74 and E78. Residues E78, 109–110 (ND), 135–137 (STS), S140, and Q188 each bind substrate. Zn(2+)-binding residues include Q188 and H196.

The protein belongs to the SIS family. GmhA subfamily. Zn(2+) serves as cofactor.

The protein resides in the cytoplasm. The catalysed reaction is 2 D-sedoheptulose 7-phosphate = D-glycero-alpha-D-manno-heptose 7-phosphate + D-glycero-beta-D-manno-heptose 7-phosphate. The protein operates within carbohydrate biosynthesis; D-glycero-D-manno-heptose 7-phosphate biosynthesis; D-glycero-alpha-D-manno-heptose 7-phosphate and D-glycero-beta-D-manno-heptose 7-phosphate from sedoheptulose 7-phosphate: step 1/1. Catalyzes the isomerization of sedoheptulose 7-phosphate in D-glycero-D-manno-heptose 7-phosphate. This chain is Phosphoheptose isomerase, found in Chlorobaculum tepidum (strain ATCC 49652 / DSM 12025 / NBRC 103806 / TLS) (Chlorobium tepidum).